The primary structure comprises 237 residues: Protein-S-isoprenylcysteine O-methyltransferase (237 aa).

4 helical membrane-spanning segments follow: residues 26-46 (SSAISCGLGIGIGFGIALFIF), 53-73 (FGIYLAGLCTFHMWEYIWVTM), 92-112 (FNMALLISFIEFWIEWYFFPS), and 116-136 (FSLWWVGAICMVFGQIVRSVA). Residues glutamine 149, 156-159 (HVLV), tyrosine 164, and 169-172 (HPSY) contribute to the S-adenosyl-L-methionine site. The helical transmembrane segment at 184-204 (VILMNPISIIGFGWASWSFFS) threads the bilayer. Residue arginine 206 participates in substrate binding. Glutamate 210 contributes to the S-adenosyl-L-methionine binding site.

Belongs to the class VI-like SAM-binding methyltransferase superfamily. Isoprenylcysteine carboxyl methyltransferase family.

Its subcellular location is the endoplasmic reticulum membrane. The catalysed reaction is [protein]-C-terminal S-[(2E,6E)-farnesyl]-L-cysteine + S-adenosyl-L-methionine = [protein]-C-terminal S-[(2E,6E)-farnesyl]-L-cysteine methyl ester + S-adenosyl-L-homocysteine. Methylates the C-terminal cysteine residues of small GTPases and the heterotrimeric G protein gamma subunit in response to cAMP. The methylation is required for intercellular signaling and regulation of cAMP waves propagation. It also seems to induce the activity of car1, a G protein-coupled receptor which senses extracellular cAMP during the aggregation phase of development. This is Protein-S-isoprenylcysteine O-methyltransferase (icmt-1) from Dictyostelium discoideum (Social amoeba).